We begin with the raw amino-acid sequence, 338 residues long: MIDFKAIIAKVATGATLTRDEAASAFDGMMSGDATPSQMGALLMGLRVRGETVDEITGAVSTMRAKMLTVDAPADAVDIVGTGGDGSGSVNVSTCASFIVAGCGVPVAKHGNRALSSKSGAADVLNALGVRIDITPEHVGRCVTEAGIGFMFAPTHHPAMKNVGPTRVELATRTIFNLLGPLSNPAGVKRQMIGVFSRQWVQPLAQVLKNLGSESIWVVHGSDGLDEITLSGPTAVAELKNGEIRTFEVTPDEAGLPRAHAEALRGGDAEANAVALRSVLEGMPSPYRDVALLNAAAALVVAGKAKDLKEGVALGAKSIDSGAAEGRLRRLIAVTAAG.

Residues Gly81, 84–85 (GD), Ser89, 91–94 (NVST), 109–117 (KHGNRALSS), and Ala121 each bind 5-phospho-alpha-D-ribose 1-diphosphate. Anthranilate is bound at residue Gly81. Residue Ser93 coordinates Mg(2+). Anthranilate is bound at residue Asn112. Arg167 provides a ligand contact to anthranilate. Positions 226 and 227 each coordinate Mg(2+).

This sequence belongs to the anthranilate phosphoribosyltransferase family. As to quaternary structure, homodimer. Mg(2+) is required as a cofactor.

The catalysed reaction is N-(5-phospho-beta-D-ribosyl)anthranilate + diphosphate = 5-phospho-alpha-D-ribose 1-diphosphate + anthranilate. It functions in the pathway amino-acid biosynthesis; L-tryptophan biosynthesis; L-tryptophan from chorismate: step 2/5. In terms of biological role, catalyzes the transfer of the phosphoribosyl group of 5-phosphorylribose-1-pyrophosphate (PRPP) to anthranilate to yield N-(5'-phosphoribosyl)-anthranilate (PRA). This Rhodopseudomonas palustris (strain BisB5) protein is Anthranilate phosphoribosyltransferase.